The following is a 320-amino-acid chain: MRSAQVYRWQIPMDAGVVLRDRRLKTRDGLYVCLRDGEREGWGEISPLPGFSQETWEEAQTALLTWVNDWLQGSEGLPEMPSVAFGASCALAELTGVLPEAADYRAAPLCTGDPDDLVLRLADMPGEKIAKVKVGLYEAVRDGMVVNLLLEAIPDLHLRLDANRAWTPLKAQQFAKYVNPDYRARIAFLEEPCKTRDDSRAFARETGIAIAWDESLREADFTFEAEEGVKAVVIKPTLTGSLDKVREQVAAAHALGLTVVISSSIESSLGLTQLARIAAWLTPGTLPGLDTLHLMQAQQVRPWPGSALPCLKRDELERLL.

The Proton donor role is filled by Lys133. Positions 161, 190, and 213 each coordinate Mg(2+). The active-site Proton acceptor is the Lys235.

Belongs to the mandelate racemase/muconate lactonizing enzyme family. MenC type 1 subfamily. A divalent metal cation is required as a cofactor.

It catalyses the reaction (1R,6R)-6-hydroxy-2-succinyl-cyclohexa-2,4-diene-1-carboxylate = 2-succinylbenzoate + H2O. It functions in the pathway quinol/quinone metabolism; 1,4-dihydroxy-2-naphthoate biosynthesis; 1,4-dihydroxy-2-naphthoate from chorismate: step 4/7. Its pathway is quinol/quinone metabolism; menaquinone biosynthesis. In terms of biological role, converts 2-succinyl-6-hydroxy-2,4-cyclohexadiene-1-carboxylate (SHCHC) to 2-succinylbenzoate (OSB). The chain is o-succinylbenzoate synthase from Salmonella dublin (strain CT_02021853).